Here is a 548-residue protein sequence, read N- to C-terminus: Chaperonin GroEL (548 aa).

Residues 30–33 (TLGP), K51, 87–91 (DGTTT), G415, 479–481 (NAA), and D495 each bind ATP.

The protein belongs to the chaperonin (HSP60) family. Forms a cylinder of 14 subunits composed of two heptameric rings stacked back-to-back. Interacts with the co-chaperonin GroES.

The protein resides in the cytoplasm. It carries out the reaction ATP + H2O + a folded polypeptide = ADP + phosphate + an unfolded polypeptide.. Together with its co-chaperonin GroES, plays an essential role in assisting protein folding. The GroEL-GroES system forms a nano-cage that allows encapsulation of the non-native substrate proteins and provides a physical environment optimized to promote and accelerate protein folding. This is Chaperonin GroEL from Vibrio campbellii (strain ATCC BAA-1116).